We begin with the raw amino-acid sequence, 321 residues long: Putrescine export system permease protein SapB (321 aa).

Residues 1 to 8 (MIIFTLRR) lie on the Cytoplasmic side of the membrane. The chain crosses the membrane as a helical span at residues 9–29 (ILLLIVTLFLLTFVGFSLSYF). The Periplasmic portion of the chain corresponds to 30 to 80 (TPHAPLQGASLWNAWVFWFNGLIHWDFGVSSINGQPIAEQLKEVFPATMEL). One can recognise an ABC transmembrane type-1 domain in the interval 74-302 (FPATMELCIL…SLVIIVNVIS (229 aa)). Residues 81-101 (CILAFGFALIVGIPVGMIAGI) form a helical membrane-spanning segment. Topologically, residues 102-112 (TRHKWQDNLIN) are cytoplasmic. Residues 113-133 (AIALLGFSIPVFWLALLLTLF) traverse the membrane as a helical segment. Over 134-174 (CSLTLGWLPVSGRFDLLYEVKPITGFALIDAWLSDSPWRDE) the chain is Periplasmic. Residues 175–195 (MIMSAIRHMILPVITLSVAPT) traverse the membrane as a helical segment. Residues 196–248 (TEVIRLMRISTIEVYDQNYVKAAATRGLSRFTILRRHVLHNALPPVIPRLGLQ) are Cytoplasmic-facing. The chain crosses the membrane as a helical span at residues 249-269 (FSTMLTLAMITEMVFSWPGLG). Residues 270–280 (RWLINAIRQQD) are Periplasmic-facing. A helical transmembrane segment spans residues 281–301 (YAAISAGVMVCGSLVIIVNVI). Residues 302–321 (SDILGAMANPLKHKEWYALR) are Cytoplasmic-facing.

This sequence belongs to the binding-protein-dependent transport system permease family. OppBC subfamily.

It localises to the cell inner membrane. Functionally, part of a putrescine export transport system, does not play a role in resistance to antimicrobial peptides. The protein is Putrescine export system permease protein SapB (sapB) of Escherichia coli (strain K12).